Consider the following 331-residue polypeptide: Beta-ketoacyl-[acyl-carrier-protein] synthase III (331 aa).

Catalysis depends on residues C113 and H256. Residues 257–261 are ACP-binding; it reads QANKR. N286 is an active-site residue.

This sequence belongs to the thiolase-like superfamily. FabH family. In terms of assembly, homodimer.

It is found in the cytoplasm. The enzyme catalyses malonyl-[ACP] + acetyl-CoA + H(+) = 3-oxobutanoyl-[ACP] + CO2 + CoA. The protein operates within lipid metabolism; fatty acid biosynthesis. Catalyzes the condensation reaction of fatty acid synthesis by the addition to an acyl acceptor of two carbons from malonyl-ACP. Catalyzes the first condensation reaction which initiates fatty acid synthesis and may therefore play a role in governing the total rate of fatty acid production. Possesses both acetoacetyl-ACP synthase and acetyl transacylase activities. Its substrate specificity determines the biosynthesis of branched-chain and/or straight-chain of fatty acids. This is Beta-ketoacyl-[acyl-carrier-protein] synthase III from Solibacter usitatus (strain Ellin6076).